The following is a 133-amino-acid chain: Large ribosomal subunit protein uL22c (133 aa).

It belongs to the universal ribosomal protein uL22 family. In terms of assembly, part of the 50S ribosomal subunit.

It is found in the plastid. It localises to the chloroplast. Functionally, this protein binds specifically to 23S rRNA. The globular domain of the protein is located near the polypeptide exit tunnel on the outside of the subunit, while an extended beta-hairpin is found that lines the wall of the exit tunnel in the center of the 70S ribosome. This chain is Large ribosomal subunit protein uL22c (rpl22), found in Manihot esculenta (Cassava).